The primary structure comprises 352 residues: Probable protein phosphatase 2C 56 (352 aa).

2 disordered regions span residues arginine 18–glycine 37 and serine 53–glycine 87. Low complexity-rich tracts occupy residues alanine 23–glycine 37 and serine 53–arginine 75. The PPM-type phosphatase domain maps to serine 96–phenylalanine 343. Mn(2+) is bound by residues aspartate 132, glycine 133, aspartate 295, and aspartate 334.

The protein belongs to the PP2C family. Mg(2+) serves as cofactor. The cofactor is Mn(2+).

The enzyme catalyses O-phospho-L-seryl-[protein] + H2O = L-seryl-[protein] + phosphate. It catalyses the reaction O-phospho-L-threonyl-[protein] + H2O = L-threonyl-[protein] + phosphate. The sequence is that of Probable protein phosphatase 2C 56 from Oryza sativa subsp. japonica (Rice).